The sequence spans 260 residues: tRNA pseudouridine synthase C (260 aa).

Residue Asp-54 is part of the active site.

It belongs to the pseudouridine synthase RluA family.

It catalyses the reaction uridine(65) in tRNA = pseudouridine(65) in tRNA. Responsible for synthesis of pseudouridine from uracil-65 in transfer RNAs. This is tRNA pseudouridine synthase C (truC) from Escherichia coli O157:H7.